The primary structure comprises 341 residues: Muscleblind-like protein 1 (341 aa).

T6 is modified (phosphothreonine). 4 consecutive C3H1-type zinc fingers follow at residues 13–41, 47–73, 178–206, and 214–240; these read WLTL…HPSK, NGRV…HPPP, TDRL…HPAD, and DNTV…HPPA.

It belongs to the muscleblind family. As to quaternary structure, interacts with DDX1 and YBX1. Interacts with HNRNPH1; the interaction in RNA-independent. Interacts with RBPMS; the interaction allows cooperative assembly of RNA-bound stable cell-specific alternative splicing regulatory complexes. Highly expressed in cardiac and skeletal muscle. Weakly expressed in heart and eye (at protein level).

The protein localises to the nucleus. It localises to the cytoplasm. It is found in the cytoplasmic granule. Mediates pre-mRNA alternative splicing regulation. Acts either as activator or repressor of splicing on specific pre-mRNA targets. Inhibits cardiac troponin-T (TNNT2) pre-mRNA exon inclusion but induces insulin receptor (IR) pre-mRNA exon inclusion in muscle. Antagonizes the alternative splicing activity pattern of CELF proteins. Regulates the TNNT2 exon 5 skipping through competition with U2AF2. Inhibits the formation of the spliceosome A complex on intron 4 of TNNT2 pre-mRNA. Binds to the stem-loop structure within the polypyrimidine tract of TNNT2 intron 4 during spliceosome assembly. Binds to the 5'-YGCU(U/G)Y-3'consensus sequence. Binds to the IR RNA. Binds to CUG triplet repeat expansion in myotonic dystrophy muscle cells by sequestering the target RNAs. Together with RNA binding proteins RBPMS and RBFOX2, activates vascular smooth muscle cells alternative splicing events. Regulates NCOR2 alternative splicing. The sequence is that of Muscleblind-like protein 1 (Mbnl1) from Mus musculus (Mouse).